Here is a 429-residue protein sequence, read N- to C-terminus: MLSMLLPFGNSGVYASDVDREDRPEIAKLVQAFPTIEEDYHVVKLVGAGSFSSVFKAVDRHFDSYDNSYWISSQIEDQMPHDKTKRPKNHFVALKRIYATVLPSRIQTELEMLHELRGSDCVLNMITAVRHQDQVLIVLPFIQHAEFRDFYMKYSLPEIGAYLRDLLKGLAHIDAKGIIHRDIKPGNFAWNPYTQRGVILDFGLAQWQEADAPTENCCVDKLRKLKQEGKYYDYFPFEKTIADPPEGYLLHDPRPTKRADRAGTRGFRAPEVLFRCQNQTSSIDVWSVGVILLCFLTHRYPFFRCEDDIDAIVELAHIFGRNGMSNCALLHGQIWSDNIPTLLDQKHNWLDLIASITKNDENLILETSSDYQVALAIDLLDKLLELHPSKRVKAKTALQHEFFNACGVTRSGFEAENPFRSDFPSTVEQ.

The region spanning 40-402 (YHVVKLVGAG…KAKTALQHEF (363 aa)) is the Protein kinase domain. ATP is bound by residues 46–54 (VGAGSFSSV) and K95. The Proton acceptor role is filled by D182. T264 is subject to Phosphothreonine.

This sequence belongs to the protein kinase superfamily. Ser/Thr protein kinase family. CDC7 subfamily. As to quaternary structure, interacts with spo6.

Its subcellular location is the nucleus. It catalyses the reaction L-seryl-[protein] + ATP = O-phospho-L-seryl-[protein] + ADP + H(+). The catalysed reaction is L-threonyl-[protein] + ATP = O-phospho-L-threonyl-[protein] + ADP + H(+). Required for the initiation of meiosis II and progression through anaphase II. The chain is Cell cycle protein kinase spo4 (spo4) from Schizosaccharomyces pombe (strain 972 / ATCC 24843) (Fission yeast).